The following is a 598-amino-acid chain: UvrABC system protein C (598 aa).

In terms of domain architecture, GIY-YIG spans 14-91 (DSPGCYLHKD…IQKNMPKYNI (78 aa)). Residues 196-231 (DKIIEDLRSKMLAASKEMAFERAAEYRDLISGIATM) form the UVR domain.

Belongs to the UvrC family. As to quaternary structure, interacts with UvrB in an incision complex.

The protein localises to the cytoplasm. The UvrABC repair system catalyzes the recognition and processing of DNA lesions. UvrC both incises the 5' and 3' sides of the lesion. The N-terminal half is responsible for the 3' incision and the C-terminal half is responsible for the 5' incision. In Streptococcus pyogenes serotype M1, this protein is UvrABC system protein C.